A 395-amino-acid chain; its full sequence is MILGNGKTLPKHIRLAHIFATQNSSAKKDNPLGPEGMVTKDGFIISKEEWAFVQAYVTTGTGLPINDDEMRRHVGLPSRIQIPDDFNQLYKVYNEDKHLCSWWNGFLFPLVLKTANDISAYGFKCAGKGATKGYYEVMQDDVENISDNGYDKVAQEKAHKDLQARCKILIKEADQYKAAADDVSKHLNTFLKGGQDSDGNDVIGVEAVQVQLAQVKDNLDGLYGDKSPRHEELLKKVDDLKKELEAAIKAENELEKKVKMSFALGPLLGFVVYEILELTAVKSIHKKVEALQAELDTANDELDRDVKILGMMNSIDTDIDNMLEQGEQALVVFRKIAGIWSVISLNIGNLRETSLKEIEEENDDDALYIELGDAAGQWKEIAEEAQSFVLNAYTP.

This sequence belongs to the cry6A endotoxin family.

In terms of biological role, endotoxin with nematicidal activity. The polypeptide is Pesticidal crystal protein Cry6Ba (cry6Ba) (Bacillus thuringiensis).